Consider the following 89-residue polypeptide: UPF0213 protein HQ_3675A (89 aa).

The 76-residue stretch at 3-78 (DYHYVYIVEC…KSYTREKKQQ (76 aa)) folds into the GIY-YIG domain.

This sequence belongs to the UPF0213 family.

The chain is UPF0213 protein HQ_3675A from Haloquadratum walsbyi (strain DSM 16790 / HBSQ001).